A 305-amino-acid chain; its full sequence is Carbamate kinase (305 aa).

Belongs to the carbamate kinase family.

The protein resides in the cytoplasm. It catalyses the reaction hydrogencarbonate + NH4(+) + ATP = carbamoyl phosphate + ADP + H2O + H(+). It participates in metabolic intermediate metabolism; carbamoyl phosphate degradation; CO(2) and NH(3) from carbamoyl phosphate: step 1/1. This is Carbamate kinase (arcC) from Thermoplasma acidophilum (strain ATCC 25905 / DSM 1728 / JCM 9062 / NBRC 15155 / AMRC-C165).